We begin with the raw amino-acid sequence, 211 residues long: Large ribosomal subunit protein uL3 (211 aa).

Gln-150 is subject to N5-methylglutamine.

This sequence belongs to the universal ribosomal protein uL3 family. Part of the 50S ribosomal subunit. Forms a cluster with proteins L14 and L19. In terms of processing, methylated by PrmB.

Functionally, one of the primary rRNA binding proteins, it binds directly near the 3'-end of the 23S rRNA, where it nucleates assembly of the 50S subunit. The sequence is that of Large ribosomal subunit protein uL3 from Pseudomonas fluorescens (strain ATCC BAA-477 / NRRL B-23932 / Pf-5).